The primary structure comprises 1011 residues: Unconventional myosin ID (1011 aa).

Residues 7-690 (AGVQDFVLLD…TLFALEHQRN (684 aa)) enclose the Myosin motor domain. 100-107 (GESGAGKT) contacts ATP. The actin-binding stretch occupies residues 567–589 (MADLVVTLLKKEPFYVRCIKPND). 2 IQ domains span residues 694–714 (PHIVTLLQKRVRGWIVRRNFK) and 716–736 (MKAAITIVRAYKAYKLRSYVQ). The region spanning 806 to 1007 (AGRRPYWGQA…EGNIIFEVPA (202 aa)) is the TH1 domain.

The protein belongs to the TRAFAC class myosin-kinesin ATPase superfamily. Myosin family. Binds to F-actin. Interacts with arm. Interacts with shg. Interacts with ds (via intracellular region). In terms of tissue distribution, in the embryo, expressed in gastric caeca, midgut cells of the proventriculus, and in the mid and hindgut. In the larval gut brush border, expression is in the terminal web domain. In the adult gut brush border, expression remains in the web domain and has also moved into the microvilli. Also expressed at low levels in follicle cells during oogenesis.

The protein localises to the cytoplasm. It is found in the cell cortex. Its subcellular location is the cytoskeleton. It localises to the cell membrane. The protein resides in the cell junction. The protein localises to the adherens junction. It is found in the cell projection. Functionally, unconventional myosin that functions as actin-based motor protein with ATPase activity. Binds to membranes enriched in phosphatidylinositol 4-5-bisphosphate, and can glide along actin filaments when anchored to a lipid bilayer. Generates left-right asymmetry at the level of single cells, organs and the whole body via its interaction with the actin cytoskeleton, both in the embryo and the adult. Normal left-right asymmetry of the larval midgut and hindgut requires expression in the embryonic hindgut epithelium during a critical time period, 10 to 12.75 hours after egg laying. This period corresponds to a late stage of germband retraction, and precedes left-right asymmetric morphogenesis. Expression in segment H1 of the imaginal ring is required at 0 to 24 hours after pupation for changes of cell shape and orientation in the H2 segment, which then gives rise to normal, dextral looping of the adult hindgut. Required during a critical period, 126-132 hours after egg laying, for normal, dextral rotation of the adult male genitalia. Has a double role by promoting dextral rotation in the posterior compartment of segment A8 of the male genital disk, and in repressing sinistral looping in the anterior compartment. This Drosophila melanogaster (Fruit fly) protein is Unconventional myosin ID.